A 1792-amino-acid chain; its full sequence is Brefeldin A-inhibited guanine nucleotide-exchange protein 2 (1792 aa).

An N-acetylmethionine modification is found at M1. Residues 2–224 are DCB; DCB:DCB domain and DCB:HUS domain interaction; that stretch reads QESQTKSMFV…KPQSPVIQAT (223 aa). The interval 207 to 294 is disordered; sequence ELEKPMQSKP…SRGTDSGAQE (88 aa). Phosphoserine is present on residues S214, S218, and S227. Polar residues predominate over residues 214 to 225; the sequence is SKPQSPVIQATA. Residues 233 to 243 are compositionally biased toward polar residues; it reads LKQSQAQSKPT. T244 is modified (phosphothreonine). Phosphoserine is present on residues S355 and S356. The HUS; DCB:HUS domain interaction stretch occupies residues 515-535; that stretch reads ADAQCVVDIYVNYDCDLNAAN. S621 is modified (phosphoserine). T623 is modified (phosphothreonine). S624 is modified (phosphoserine). The residue at position 633 (T633) is a Phosphothreonine. Residues 661–792 enclose the SEC7 domain; the sequence is FNKKPKRGIQ…IIMLTTDLHS (132 aa). Phosphoserine is present on residues S707, S1518, S1520, S1521, S1532, S1535, S1541, and S1789.

In terms of assembly, homodimer. Interacts with ARFGEF1/BIG1; both proteins are probably part of the same or very similar macromolecular complexes. Interacts with PRKAR1A, PRKAR2A, PRKAR1B, PRKAR2B, PPP1CC, PDE3A, TNFRSF1A, MYCBP and EXOC7. Interacts with GABRB1, GABRB2 and GABRB3. Post-translationally, in vitro phosphorylated by PKA reducing its GEF activity and dephosphorylated by phosphatase PP1.

The protein resides in the cytoplasm. It is found in the membrane. It localises to the golgi apparatus. Its subcellular location is the perinuclear region. The protein localises to the trans-Golgi network. The protein resides in the endosome. It is found in the cytoskeleton. It localises to the microtubule organizing center. Its subcellular location is the centrosome. The protein localises to the cell projection. The protein resides in the dendrite. It is found in the cytoplasmic vesicle. It localises to the synapse. With respect to regulation, inhibited by brefeldin A. Its function is as follows. Promotes guanine-nucleotide exchange on ARF1 and ARF3 and to a lower extent on ARF5 and ARF6. Promotes the activation of ARF1/ARF5/ARF6 through replacement of GDP with GTP. Involved in the regulation of Golgi vesicular transport. Required for the integrity of the endosomal compartment. Involved in trafficking from the trans-Golgi network (TGN) to endosomes and is required for membrane association of the AP-1 complex and GGA1. Seems to be involved in recycling of the transferrin receptor from recycling endosomes to the plasma membrane. Probably is involved in the exit of GABA(A) receptors from the endoplasmic reticulum. Involved in constitutive release of tumor necrosis factor receptor 1 via exosome-like vesicles; the function seems to involve PKA and specifically PRKAR2B. Proposed to act as A kinase-anchoring protein (AKAP) and may mediate crosstalk between Arf and PKA pathways. In Mus musculus (Mouse), this protein is Brefeldin A-inhibited guanine nucleotide-exchange protein 2 (Arfgef2).